The chain runs to 351 residues: Translation initiation factor eIF2B subunit beta (351 aa).

Belongs to the eIF-2B alpha/beta/delta subunits family. As to quaternary structure, component of the translation initiation factor 2B (eIF2B) complex which is a heterodecamer of two sets of five different subunits: alpha, beta, gamma, delta and epsilon. Subunits alpha, beta and delta comprise a regulatory subcomplex and subunits epsilon and gamma comprise a catalytic subcomplex. Within the complex, the hexameric regulatory complex resides at the center, with the two heterodimeric catalytic subcomplexes bound on opposite sides.

It localises to the cytoplasm. It is found in the cytosol. Activated by the chemical integrated stress response (ISR) inhibitor ISRIB which stimulates guanine nucleotide exchange factor activity for both phosphorylated and unphosphorylated eIF2. In terms of biological role, acts as a component of the translation initiation factor 2B (eIF2B) complex, which catalyzes the exchange of GDP for GTP on eukaryotic initiation factor 2 (eIF2) gamma subunit. Its guanine nucleotide exchange factor activity is repressed when bound to eIF2 complex phosphorylated on the alpha subunit, thereby limiting the amount of methionyl-initiator methionine tRNA available to the ribosome and consequently global translation is repressed. The sequence is that of Translation initiation factor eIF2B subunit beta (Eif2b2) from Rattus norvegicus (Rat).